Here is a 358-residue protein sequence, read N- to C-terminus: Gibberellin receptor GID1B (358 aa).

N-acetylalanine is present on Ala2. The Involved in the stabilization of the negatively charged intermediate by the formation of the oxyanion hole motif lies at 113–115 (HGG). Residues 115–116 (GS), Tyr127, and Ser191 contribute to the gibberellin A4 site. Ser116, Tyr127, Ser191, and Phe238 together coordinate gibberellin A3. Residue Ser191 is part of the active site. Residue Asp289 is part of the active site. A gibberellin A4-binding site is contributed by Gly320. Gly320 is a binding site for gibberellin A3.

This sequence belongs to the 'GDXG' lipolytic enzyme family. In terms of assembly, interacts with the DELLA proteins GAI, RGA, RGL1, RGL2 and RGL3 in a GA-dependent manner. In terms of tissue distribution, widely expressed.

The protein resides in the nucleus. In terms of biological role, functions as a soluble gibberellin (GA) receptor. GA is an essential hormone that regulates growth and development in plants. Binds with high affinity the biologically active gibberellin GA4, but has no affinity for the biologically inactive GAs. In response to GA, interacts with specific DELLA proteins, known as repressors of GA-induced growth, and targets them for degradation via proteasome. Seems to be required for GA signaling that controls root growth, seed germination and flower development. May function as a dominant GA receptor at low GA concentrations in germination. Partially redundant with GID1A and GID1C. The sequence is that of Gibberellin receptor GID1B (GID1B) from Arabidopsis thaliana (Mouse-ear cress).